A 133-amino-acid polypeptide reads, in one-letter code: Ribonuclease VapC17 (133 aa).

Residues Asp7 and Asp93 each coordinate Mg(2+). In terms of domain architecture, PINc spans 30–118 (AICDIGELEW…HHDRDYKRIA (89 aa)).

Belongs to the PINc/VapC protein family. It depends on Mg(2+) as a cofactor.

In terms of biological role, toxic component of a type II toxin-antitoxin (TA) system. An RNase. The cognate antitoxin is VapB17. This Mycobacterium tuberculosis (strain CDC 1551 / Oshkosh) protein is Ribonuclease VapC17.